The chain runs to 246 residues: Protein crossbronx (246 aa).

The UBC core domain occupies Gln-20–Ala-177.

The protein belongs to the ubiquitin-conjugating enzyme family. FTS subfamily.

The protein is Protein crossbronx (cbx) of Drosophila grimshawi (Hawaiian fruit fly).